Here is a 307-residue protein sequence, read N- to C-terminus: MIEVIFLGTGGIKPTPERNVPSIAIRIGSEIVLFDVGEGTLRQMEIAGLNPMRIKRIFITHFHGDHYLGLAAIIQTMNLWDRRETLHIYGPENSGEFISNFLKSGYFAPGFDVVVHEITGKARLQFENYEIWTFEVSHGIPALGYVFKEKDRRGNFDLEKIKSLGLTPGPWMKELEKRKIIKIGERVIRLSEVTGPKKRGAKVVYTGDTEPIDDIVEFSKRADLLIHEATYISSEHRKDSYHTTIEEAYEMFKSSKARHLALFHRAPRYSYQEYAVAAKELCPEAYVPRDFDRVFVGGMGNVIFKVR.

Zn(2+) contacts are provided by His61, His63, Asp65, His66, His138, Asp208, and His264. The active-site Proton acceptor is the Asp65.

This sequence belongs to the RNase Z family. In terms of assembly, homodimer. It depends on Zn(2+) as a cofactor.

It carries out the reaction Endonucleolytic cleavage of RNA, removing extra 3' nucleotides from tRNA precursor, generating 3' termini of tRNAs. A 3'-hydroxy group is left at the tRNA terminus and a 5'-phosphoryl group is left at the trailer molecule.. Its function is as follows. Zinc phosphodiesterase, which displays some tRNA 3'-processing endonuclease activity. Probably involved in tRNA maturation, by removing a 3'-trailer from precursor tRNA. Also shows activity toward a broad range of substrates, such as intron containing pre-tRNAs, 5' extended precursors and non-RNA substrates. In Pyrococcus furiosus (strain ATCC 43587 / DSM 3638 / JCM 8422 / Vc1), this protein is Ribonuclease Z.